Here is a 452-residue protein sequence, read N- to C-terminus: MAGYLRVVRSLCRASGSGSAWAPAALTAPNLQEQPRRHYADKRIKVAKPVVEMDGDEMTRIIWQFIKEKLILPHVDVQLKYFDLGLPNRDQTNDQVTIDSALATQKYSVAVKCATITPDEARVEEFKLKKMWKSPNGTIRNILGGTVFREPIICKNIPRLVPGWTKPITIGRHAHGDQYKATDFVVDRAGTFKVVFTPKDGSGPKEWEVYNFPAGGVGMGMYNTDESISGFAHSCFQYAIQKKWPLYMSTKNTILKAYDGRFKDIFQAIFEKHYKTEFDKHKIWYEHRLIDDMVAQVLKSSGGFVWACKNYDGDVQSDILAQGFGSLGLMTSVLVCPDGKTIEAEAAHGTVTRHYREHQKGRPTSTNPIASIFAWTRGLEHRGKLDGNQDLIRFAQTLEKVCVETVESGAMTKDLAGCIHGLSNVKLNEHFLNTSDFLDTIKSNLDRALGQQ.

The N-terminal 39 residues, 1–39 (MAGYLRVVRSLCRASGSGSAWAPAALTAPNLQEQPRRHY), are a transit peptide targeting the mitochondrion. Lysine 45, lysine 48, lysine 67, and lysine 69 each carry N6-acetyllysine. 2 positions are modified to N6-acetyllysine; alternate: lysine 80 and lysine 106. N6-succinyllysine; alternate occurs at positions 80 and 106. NADP(+) is bound by residues 115–117 (TIT) and arginine 122. Threonine 117 contacts D-threo-isocitrate. Residues 134–140 (SPNGTIR) and arginine 149 contribute to the D-threo-isocitrate site. At lysine 155 the chain carries N6-acetyllysine. Lysine 166 carries the N6-acetyllysine; alternate modification. Lysine 166 bears the N6-succinyllysine; alternate mark. D-threo-isocitrate is bound at residue arginine 172. N6-acetyllysine; alternate occurs at positions 180 and 193. N6-succinyllysine; alternate occurs at positions 180 and 193. N6-acetyllysine is present on lysine 199. The residue at position 256 (lysine 256) is an N6-acetyllysine; alternate. Lysine 256 is subject to N6-succinyllysine; alternate. Residues lysine 263, lysine 272, lysine 275, and lysine 280 each carry the N6-acetyllysine modification. An N6-acetyllysine; alternate modification is found at lysine 282. Lysine 282 is subject to N6-succinyllysine; alternate. Aspartate 291 lines the Mn(2+) pocket. NADP(+) is bound at residue lysine 299. Mn(2+) is bound at residue aspartate 314. Residues 349 to 354 (GTVTRH) and asparagine 367 contribute to the NADP(+) site. An N6-acetyllysine; alternate modification is found at lysine 384. N6-succinyllysine; alternate is present on lysine 384. An N6-acetyllysine mark is found at lysine 400, lysine 413, and lysine 442.

Belongs to the isocitrate and isopropylmalate dehydrogenases family. In terms of assembly, homodimer. It depends on Mg(2+) as a cofactor. Mn(2+) is required as a cofactor. Acetylation at Lys-413 dramatically reduces catalytic activity. Deacetylated by SIRT3.

Its subcellular location is the mitochondrion. The catalysed reaction is D-threo-isocitrate + NADP(+) = 2-oxoglutarate + CO2 + NADPH. Functionally, plays a role in intermediary metabolism and energy production. It may tightly associate or interact with the pyruvate dehydrogenase complex. This chain is Isocitrate dehydrogenase [NADP], mitochondrial (IDH2), found in Bos taurus (Bovine).